We begin with the raw amino-acid sequence, 371 residues long: Flagellar P-ring protein (371 aa).

An N-terminal signal peptide occupies residues 1–21 (MSRSFFATVLGLALAAMTVMA).

This sequence belongs to the FlgI family. The basal body constitutes a major portion of the flagellar organelle and consists of four rings (L,P,S, and M) mounted on a central rod.

The protein localises to the periplasm. Its subcellular location is the bacterial flagellum basal body. In terms of biological role, assembles around the rod to form the L-ring and probably protects the motor/basal body from shearing forces during rotation. This Caulobacter sp. (strain K31) protein is Flagellar P-ring protein.